We begin with the raw amino-acid sequence, 74 residues long: Small integral membrane protein 15 (74 aa).

A helical transmembrane segment spans residues 20–40 (YGFLTTVILVLTPLFIISAAL). Positions 48-74 (IETREREQKKKRKRQENIVKAKRAKKD) form a coiled coil. Residues 53–74 (REQKKKRKRQENIVKAKRAKKD) form a disordered region. The span at 56-74 (KKKRKRQENIVKAKRAKKD) shows a compositional bias: basic residues.

It belongs to the SMIM15 family.

Its subcellular location is the membrane. This is Small integral membrane protein 15 (SMIM15) from Gallus gallus (Chicken).